The sequence spans 87 residues: Large ribosomal subunit protein bL27 (87 aa).

The tract at residues 1-21 is disordered; the sequence is MAHKKAGGSSRNGRDSESKRL.

The protein belongs to the bacterial ribosomal protein bL27 family.

The sequence is that of Large ribosomal subunit protein bL27 from Burkholderia multivorans (strain ATCC 17616 / 249).